The sequence spans 390 residues: GTPase Obg (390 aa).

The Obg domain occupies 1–159; the sequence is MKFVDEASIL…RDLLLELMLL (159 aa). Residues 127–147 form a disordered region; that stretch reads NTRFKSSVNRTPRQKTNGTPG. A compositionally biased stretch (polar residues) spans 129–145; that stretch reads RFKSSVNRTPRQKTNGT. The region spanning 160–333 is the OBG-type G domain; that stretch reads ADVGMLGMPN…LCWDVMTFII (174 aa). GTP contacts are provided by residues 166–173, 191–195, 213–216, 283–286, and 314–316; these read GMPNAGKS, FTTLV, DIPG, NKID, and SAA. Positions 173 and 193 each coordinate Mg(2+).

This sequence belongs to the TRAFAC class OBG-HflX-like GTPase superfamily. OBG GTPase family. In terms of assembly, monomer. The cofactor is Mg(2+).

It is found in the cytoplasm. Its function is as follows. An essential GTPase which binds GTP, GDP and possibly (p)ppGpp with moderate affinity, with high nucleotide exchange rates and a fairly low GTP hydrolysis rate. Plays a role in control of the cell cycle, stress response, ribosome biogenesis and in those bacteria that undergo differentiation, in morphogenesis control. This chain is GTPase Obg, found in Salmonella gallinarum (strain 287/91 / NCTC 13346).